We begin with the raw amino-acid sequence, 265 residues long: Phosphate import ATP-binding protein PstB 2 (265 aa).

Residues 13–260 form the ABC transporter domain; sequence FRTENLNVYY…PTKQATRDYV (248 aa). 45-52 is an ATP binding site; the sequence is GPSGCGKS.

This sequence belongs to the ABC transporter superfamily. Phosphate importer (TC 3.A.1.7) family. As to quaternary structure, the complex is composed of two ATP-binding proteins (PstB), two transmembrane proteins (PstC and PstA) and a solute-binding protein (PstS).

The protein resides in the cell inner membrane. The catalysed reaction is phosphate(out) + ATP + H2O = ADP + 2 phosphate(in) + H(+). Functionally, part of the ABC transporter complex PstSACB involved in phosphate import. Responsible for energy coupling to the transport system. This chain is Phosphate import ATP-binding protein PstB 2, found in Synechococcus sp. (strain JA-2-3B'a(2-13)) (Cyanobacteria bacterium Yellowstone B-Prime).